A 276-amino-acid polypeptide reads, in one-letter code: Hydroxyethylthiazole kinase (276 aa).

Substrate-binding residues include Met53 and Ala202.

The protein belongs to the Thz kinase family. Requires Mg(2+) as cofactor.

The catalysed reaction is 5-(2-hydroxyethyl)-4-methylthiazole + ATP = 4-methyl-5-(2-phosphooxyethyl)-thiazole + ADP + H(+). It participates in cofactor biosynthesis; thiamine diphosphate biosynthesis; 4-methyl-5-(2-phosphoethyl)-thiazole from 5-(2-hydroxyethyl)-4-methylthiazole: step 1/1. Its function is as follows. Thiazole kinase involved in thiamine salvage pathway. The polypeptide is Hydroxyethylthiazole kinase (THIM) (Arabidopsis thaliana (Mouse-ear cress)).